We begin with the raw amino-acid sequence, 282 residues long: NH(3)-dependent NAD(+) synthetase (282 aa).

51 to 58 contributes to the ATP binding site; sequence GISGGVDS. Asp-57 contacts Mg(2+). Arg-148 is a binding site for deamido-NAD(+). Thr-168 contributes to the ATP binding site. Glu-173 serves as a coordination point for Mg(2+). Residues Lys-181 and Asp-188 each contribute to the deamido-NAD(+) site. 2 residues coordinate ATP: Lys-197 and Thr-219. A deamido-NAD(+)-binding site is contributed by 268–269; sequence HK.

Belongs to the NAD synthetase family. In terms of assembly, homodimer.

It catalyses the reaction deamido-NAD(+) + NH4(+) + ATP = AMP + diphosphate + NAD(+) + H(+). It functions in the pathway cofactor biosynthesis; NAD(+) biosynthesis; NAD(+) from deamido-NAD(+) (ammonia route): step 1/1. Its function is as follows. Catalyzes the ATP-dependent amidation of deamido-NAD to form NAD. Uses ammonia as a nitrogen source. The protein is NH(3)-dependent NAD(+) synthetase of Burkholderia lata (strain ATCC 17760 / DSM 23089 / LMG 22485 / NCIMB 9086 / R18194 / 383).